The sequence spans 937 residues: Periplasmic nitrate reductase (937 aa).

Residues 1-42 constitute a signal peptide (tat-type signal); it reads MTSKIQGKKPTLSRRDFIKSAAAASAAASVGLSIPSVMSAEA. A 4Fe-4S Mo/W bis-MGD-type domain is found at 49–110; sequence WKWDKSVCRF…FCAKIMYGAD (62 aa). The [4Fe-4S] cluster site is built by Cys56, Cys59, Cys63, and Cys96. Residues Lys98, Gln166, Asn191, Cys195, 228–235, Met433, Gln437, Asn543, 568–569, Lys591, Asp618, and 827–836 contribute to the Mo-bis(molybdopterin guanine dinucleotide) site; these read WGANMAEM, SE, and TGRVLEHWHS. Trp903 is a binding site for substrate. Residues Asn911 and Lys928 each contribute to the Mo-bis(molybdopterin guanine dinucleotide) site.

Belongs to the prokaryotic molybdopterin-containing oxidoreductase family. NasA/NapA/NarB subfamily. In terms of assembly, component of the periplasmic nitrate reductase NapAB complex composed of NapA and NapB. [4Fe-4S] cluster is required as a cofactor. Requires Mo-bis(molybdopterin guanine dinucleotide) as cofactor. Post-translationally, predicted to be exported by the Tat system. The position of the signal peptide cleavage has not been experimentally proven.

It localises to the periplasm. The catalysed reaction is 2 Fe(II)-[cytochrome] + nitrate + 2 H(+) = 2 Fe(III)-[cytochrome] + nitrite + H2O. Catalytic subunit of the periplasmic nitrate reductase complex NapAB. Receives electrons from NapB and catalyzes the reduction of nitrate to nitrite. The protein is Periplasmic nitrate reductase of Helicobacter hepaticus (strain ATCC 51449 / 3B1).